Consider the following 485-residue polypeptide: Acetyl-coenzyme A carboxylase carboxyl transferase subunit beta, chloroplastic (485 aa).

A CoA carboxyltransferase N-terminal domain is found at 218 to 485 (LWIQCDNCYA…FFPLNKNEIK (268 aa)). Residues cysteine 222, cysteine 225, cysteine 241, and cysteine 244 each coordinate Zn(2+). The C4-type zinc-finger motif lies at 222-244 (CDNCYALIYKKALKFKMNVCEQC).

Belongs to the AccD/PCCB family. Acetyl-CoA carboxylase is a heterohexamer composed of biotin carboxyl carrier protein, biotin carboxylase and 2 subunits each of ACCase subunit alpha and ACCase plastid-coded subunit beta (accD). The cofactor is Zn(2+).

It localises to the plastid. The protein localises to the chloroplast stroma. The enzyme catalyses N(6)-carboxybiotinyl-L-lysyl-[protein] + acetyl-CoA = N(6)-biotinyl-L-lysyl-[protein] + malonyl-CoA. Its pathway is lipid metabolism; malonyl-CoA biosynthesis; malonyl-CoA from acetyl-CoA: step 1/1. Functionally, component of the acetyl coenzyme A carboxylase (ACC) complex. Biotin carboxylase (BC) catalyzes the carboxylation of biotin on its carrier protein (BCCP) and then the CO(2) group is transferred by the transcarboxylase to acetyl-CoA to form malonyl-CoA. The protein is Acetyl-coenzyme A carboxylase carboxyl transferase subunit beta, chloroplastic of Aethionema cordifolium (Lebanon stonecress).